Consider the following 229-residue polypeptide: Ribonuclease 3 (229 aa).

One can recognise an RNase III domain in the interval 7-132 (ISAFCDRIGH…VIAAVYRDAG (126 aa)). Position 45 (Glu-45) interacts with Mg(2+). Asp-49 is a catalytic residue. Residues Asp-118 and Glu-121 each coordinate Mg(2+). The active site involves Glu-121. The DRBM domain occupies 157 to 226 (DPKTALQEWA…AKALLAQVES (70 aa)).

Belongs to the ribonuclease III family. Homodimer. Requires Mg(2+) as cofactor.

It is found in the cytoplasm. The enzyme catalyses Endonucleolytic cleavage to 5'-phosphomonoester.. Its function is as follows. Digests double-stranded RNA. Involved in the processing of primary rRNA transcript to yield the immediate precursors to the large and small rRNAs (23S and 16S). Processes some mRNAs, and tRNAs when they are encoded in the rRNA operon. Processes pre-crRNA and tracrRNA of type II CRISPR loci if present in the organism. This Dinoroseobacter shibae (strain DSM 16493 / NCIMB 14021 / DFL 12) protein is Ribonuclease 3.